We begin with the raw amino-acid sequence, 346 residues long: Cyclin-dependent kinase 20 (346 aa).

Residues 4 to 288 (YCILGRIGEG…ASKALLHQYF (285 aa)) form the Protein kinase domain. Residues 10-18 (IGEGAHGIV) and Lys-33 each bind ATP. The Proton acceptor role is filled by Asp-127.

This sequence belongs to the protein kinase superfamily. CMGC Ser/Thr protein kinase family. CDC2/CDKX subfamily. As to quaternary structure, monomer. Interacts with TBC1D32 and MAK.

Its subcellular location is the nucleus. The protein localises to the cytoplasm. The protein resides in the cell projection. It is found in the cilium. It catalyses the reaction L-seryl-[protein] + ATP = O-phospho-L-seryl-[protein] + ADP + H(+). The enzyme catalyses L-threonyl-[protein] + ATP = O-phospho-L-threonyl-[protein] + ADP + H(+). Functionally, required for high-level Shh responses in the developing neural tube. Together with TBC1D32, controls the structure of the primary cilium by coordinating assembly of the ciliary membrane and axoneme, allowing GLI2 to be properly activated in response to SHH signaling. Involved in cell growth. Activates CDK2, a kinase involved in the control of the cell cycle, by phosphorylating residue 'Thr-160'. In Pongo abelii (Sumatran orangutan), this protein is Cyclin-dependent kinase 20 (CDK20).